A 447-amino-acid chain; its full sequence is Selenide, water dikinase 3 (447 aa).

The active site involves U50. Position 50 (U50) is a non-standard amino acid, selenocysteine. ATP contacts are provided by residues K53, 103–105 (GMD), D123, D146, and 197–200 (GGQT). D105 lines the Mg(2+) pocket. D146 serves as a coordination point for Mg(2+). D301 contributes to the Mg(2+) binding site.

This sequence belongs to the selenophosphate synthase 1 family. In terms of assembly, homodimer. It depends on Mg(2+) as a cofactor. As to expression, in the embryo, expressed in retina, olfactory vesicles, tectum, pronephros ducts and myotomes at 24 hours post-fertilization and in retina, tectum, liver and intestinal bulb 3 days after fertilization.

It catalyses the reaction hydrogenselenide + ATP + H2O = selenophosphate + AMP + phosphate + 2 H(+). Functionally, synthesizes selenophosphate from selenide and ATP. This is Selenide, water dikinase 3 from Danio rerio (Zebrafish).